A 304-amino-acid chain; its full sequence is Ribosomal protein L11 methyltransferase (304 aa).

Residues Thr-152, Gly-173, Asp-195, and Asn-234 each contribute to the S-adenosyl-L-methionine site.

It belongs to the methyltransferase superfamily. PrmA family.

The protein resides in the cytoplasm. It carries out the reaction L-lysyl-[protein] + 3 S-adenosyl-L-methionine = N(6),N(6),N(6)-trimethyl-L-lysyl-[protein] + 3 S-adenosyl-L-homocysteine + 3 H(+). Methylates ribosomal protein L11. This is Ribosomal protein L11 methyltransferase from Cupriavidus metallidurans (strain ATCC 43123 / DSM 2839 / NBRC 102507 / CH34) (Ralstonia metallidurans).